The sequence spans 154 residues: Probable transport accessory protein MmpS4 (154 aa).

2 helical membrane passes run 19–39 (IWIP…VYRV) and 97–117 (QLPW…NLVA).

Belongs to the MmpS family.

The protein resides in the cell membrane. In Mycobacterium leprae (strain TN), this protein is Probable transport accessory protein MmpS4.